The sequence spans 500 residues: Protein nucleotidyltransferase YdiU (500 aa).

Positions 96, 98, 99, 119, 131, 132, 182, and 189 each coordinate ATP. Asp-258 functions as the Proton acceptor in the catalytic mechanism. Residues Asn-259 and Asp-268 each coordinate Mg(2+). Residue Asp-268 coordinates ATP.

It belongs to the SELO family. Requires Mg(2+) as cofactor. Mn(2+) serves as cofactor.

The enzyme catalyses L-seryl-[protein] + ATP = 3-O-(5'-adenylyl)-L-seryl-[protein] + diphosphate. The catalysed reaction is L-threonyl-[protein] + ATP = 3-O-(5'-adenylyl)-L-threonyl-[protein] + diphosphate. It carries out the reaction L-tyrosyl-[protein] + ATP = O-(5'-adenylyl)-L-tyrosyl-[protein] + diphosphate. It catalyses the reaction L-histidyl-[protein] + UTP = N(tele)-(5'-uridylyl)-L-histidyl-[protein] + diphosphate. The enzyme catalyses L-seryl-[protein] + UTP = O-(5'-uridylyl)-L-seryl-[protein] + diphosphate. The catalysed reaction is L-tyrosyl-[protein] + UTP = O-(5'-uridylyl)-L-tyrosyl-[protein] + diphosphate. Its function is as follows. Nucleotidyltransferase involved in the post-translational modification of proteins. It can catalyze the addition of adenosine monophosphate (AMP) or uridine monophosphate (UMP) to a protein, resulting in modifications known as AMPylation and UMPylation. The protein is Protein nucleotidyltransferase YdiU of Rhizobium leguminosarum bv. trifolii (strain WSM2304).